The chain runs to 426 residues: Serine--tRNA ligase (426 aa).

Residue 233–235 coordinates L-serine; it reads TSE. 264–266 is an ATP binding site; it reads RAE. L-serine is bound at residue Glu-287. 351 to 354 is a binding site for ATP; that stretch reads EISS. An L-serine-binding site is contributed by Ser-387.

The protein belongs to the class-II aminoacyl-tRNA synthetase family. Type-1 seryl-tRNA synthetase subfamily. Homodimer. The tRNA molecule binds across the dimer.

It localises to the cytoplasm. It catalyses the reaction tRNA(Ser) + L-serine + ATP = L-seryl-tRNA(Ser) + AMP + diphosphate + H(+). The enzyme catalyses tRNA(Sec) + L-serine + ATP = L-seryl-tRNA(Sec) + AMP + diphosphate + H(+). It participates in aminoacyl-tRNA biosynthesis; selenocysteinyl-tRNA(Sec) biosynthesis; L-seryl-tRNA(Sec) from L-serine and tRNA(Sec): step 1/1. Catalyzes the attachment of serine to tRNA(Ser). Is also able to aminoacylate tRNA(Sec) with serine, to form the misacylated tRNA L-seryl-tRNA(Sec), which will be further converted into selenocysteinyl-tRNA(Sec). In Xanthomonas euvesicatoria pv. vesicatoria (strain 85-10) (Xanthomonas campestris pv. vesicatoria), this protein is Serine--tRNA ligase.